We begin with the raw amino-acid sequence, 154 residues long: MSARCGSTARTLFELCDQCNITLPTLQINCIFCNSILQTAEVLAFAFRELYVVWRNDFPFAACVKCLEFYGKVNQYRNFRYAAYAPTVEEETGLTILEVRIRCCKCHKPLSPVEKTNHIVKKTQFFKLQDSWTGYCLHCWKKCMEKGQRSETSC.

Zinc fingers lie at residues 30-66 (CIFCNSILQTAEVLAFAFRELYVVWRNDFPFAACVKC) and 103-139 (CCKCHKPLSPVEKTNHIVKKTQFFKLQDSWTGYCLHC).

It belongs to the papillomaviridae E6 protein family. Forms homodimers. Interacts with ubiquitin-protein ligase UBE3A/E6-AP; this interaction stimulates UBE3A ubiquitin activity. Interacts with host TP53 and EP300; this interaction inhibits TP53 activity.

The protein localises to the host cytoplasm. Its subcellular location is the host nucleus. Its function is as follows. Plays a major role in the induction and maintenance of cellular transformation. E6 associates with host UBE3A/E6-AP ubiquitin-protein ligase and modulates its activity. Sequesters tumor suppressor TP53 in the host cytoplasm and modulates its activity by interacting with host EP300 that results in the reduction of TP53 acetylation and activation. In turn, apoptosis induced by DNA damage is inhibited. E6 also protects host keratinocytes from apoptosis by mediating the degradation of host BAK1. May also inhibit host immune response. The protein is Protein E6 of Human papillomavirus 7.